The primary structure comprises 272 residues: L-aminoadipate-semialdehyde dehydrogenase-phosphopantetheinyl transferase (272 aa).

Belongs to the P-Pant transferase superfamily. AcpS family.

The enzyme catalyses apo-[ACP] + CoA = holo-[ACP] + adenosine 3',5'-bisphosphate + H(+). Its function is as follows. Catalyzes the transfer of a 4'-phosphopantetheine moiety from coenzyme A to a serine residue of acceptor proteins, such as alpha-aminoadipate reductase. Necessary for alpha-aminoadipate reductase activity. This chain is L-aminoadipate-semialdehyde dehydrogenase-phosphopantetheinyl transferase, found in Saccharomyces cerevisiae (strain ATCC 204508 / S288c) (Baker's yeast).